The primary structure comprises 220 residues: Uracil-DNA glycosylase (220 aa).

Residue D60 is the Proton acceptor of the active site.

The protein belongs to the uracil-DNA glycosylase (UDG) superfamily. UNG family.

The protein resides in the cytoplasm. The enzyme catalyses Hydrolyzes single-stranded DNA or mismatched double-stranded DNA and polynucleotides, releasing free uracil.. In terms of biological role, excises uracil residues from the DNA which can arise as a result of misincorporation of dUMP residues by DNA polymerase or due to deamination of cytosine. The protein is Uracil-DNA glycosylase of Francisella tularensis subsp. tularensis (strain FSC 198).